The following is a 238-amino-acid chain: Probable transglycosylase SceD 1 (238 aa).

An N-terminal signal peptide occupies residues 1 to 27; the sequence is MKKTVVASTLAVGLGVTGFAAGNSADA. Polar residues predominate over residues 87–97; sequence TNAPAQETAEQ. Positions 87-161 are disordered; that stretch reads TNAPAQETAE…SEASEGSSVN (75 aa). Residues 102 to 156 show a composition bias toward low complexity; the sequence is EQPQQTEQASTEQPAQEAAPQTEETQQPQQEATTQTTSSSNESTSNESSSSEASE.

The protein belongs to the transglycosylase family. SceD subfamily.

Its subcellular location is the secreted. Its function is as follows. Is able to cleave peptidoglycan and affects clumping and separation of bacterial cells. This is Probable transglycosylase SceD 1 (sceD1) from Staphylococcus saprophyticus subsp. saprophyticus (strain ATCC 15305 / DSM 20229 / NCIMB 8711 / NCTC 7292 / S-41).